Consider the following 102-residue polypeptide: Large ribosomal subunit protein bL28 (102 aa).

Positions 1–20 are disordered; that stretch reads MSRRCELTAKGPQVGHKVSH.

It belongs to the bacterial ribosomal protein bL28 family.

The protein is Large ribosomal subunit protein bL28 of Bradyrhizobium sp. (strain ORS 278).